The sequence spans 110 residues: Large ribosomal subunit protein P1 (110 aa).

Alanine 2 is subject to Blocked amino end (Ala). Residues alanine 69–proline 83 are compositionally biased toward low complexity. The disordered stretch occupies residues alanine 69–aspartate 110. A compositionally biased stretch (basic and acidic residues) spans alanine 84 to glutamate 96. The residue at position 97 (serine 97) is a Phosphoserine; in form eL12'-P.

As to quaternary structure, part of the ribosomal stalk of the large ribosomal subunit; P1 and P2 exist as dimers which assemble on the P0 scaffold. In terms of processing, phosphorylation of Ser-97 converts eL12' to eL12'-P.

Functionally, plays an important role in the elongation step of protein synthesis. In Artemia salina (Brine shrimp), this protein is Large ribosomal subunit protein P1.